The chain runs to 220 residues: Splicing factor U2AF 26 kDa subunit (220 aa).

An N-acetylalanine modification is found at Ala-2. The segment at 12-40 (EKDKVNCSFYFKIGACRHGDRCSRLHNKP) adopts a C3H1-type 1 zinc-finger fold. The 83-residue stretch at 65 to 147 (SHCHVSDVEV…QAVHAELSPV (83 aa)) folds into the RRM domain. A C3H1-type 2 zinc finger spans residues 149-176 (DFRESCCRQYEMGECTRGGFCNFMHLRP). The interval 186 to 220 (YGRGPRHRSPPRSHTGHRPRERNRRRSPDHRHGRF) is disordered. Residues 189–220 (GPRHRSPPRSHTGHRPRERNRRRSPDHRHGRF) are compositionally biased toward basic residues.

The protein belongs to the splicing factor SR family. In terms of assembly, interacts with GFI1, U2AF2 and C1QBP. Isoform 3 interacts with PER1. Post-translationally, isoform 3 is rapidly degraded by a proteasome-mediated degradation pathway. In terms of tissue distribution, ubiquitous. Highly expressed in the brain.

Its subcellular location is the nucleus. It localises to the nucleus speckle. It is found in the cytoplasm. Functionally, RNA-binding protein that function as a pre-mRNA splicing factor. Plays a critical role in both constitutive and enhancer-dependent splicing by mediating protein-protein interactions and protein-RNA interactions required for accurate 3'-splice site selection. It can functionally substitute for U2AF1 in constitutive splicing and enhancer-dependent splicing. Acts by enhancing the binding of U2AF2 to weak pyrimidine tracts. Also participates in the regulation of alternative pre-mRNA splicing. Activates exon 5 skipping of PTPRC during T-cell activation; an event reversed by GFI1. Binds to RNA at the AG dinucleotide at the 3'-splice site. Shows a preference for AGC or AGA. Alternative splicing of U2AF1L4 may play a role in connecting the circadian rhythm to changing external cues: may provide a circadian buffering system in central and periphery clocks that allows synchronized adaption to clock-resetting stimuli in order to prevent potentially pathogenic desynchronization. This Mus musculus (Mouse) protein is Splicing factor U2AF 26 kDa subunit (U2af1l4).